Here is a 127-residue protein sequence, read N- to C-terminus: Large ribosomal subunit protein bL12 (127 aa).

The protein belongs to the bacterial ribosomal protein bL12 family. In terms of assembly, homodimer. Part of the ribosomal stalk of the 50S ribosomal subunit. Forms a multimeric L10(L12)X complex, where L10 forms an elongated spine to which 2 to 4 L12 dimers bind in a sequential fashion. Binds GTP-bound translation factors.

In terms of biological role, forms part of the ribosomal stalk which helps the ribosome interact with GTP-bound translation factors. Is thus essential for accurate translation. The chain is Large ribosomal subunit protein bL12 from Desulforapulum autotrophicum (strain ATCC 43914 / DSM 3382 / VKM B-1955 / HRM2) (Desulfobacterium autotrophicum).